The primary structure comprises 472 residues: MRTRFAPSPTGFLHVGGARTALFCHLQARHVGGTTVLRIEDTDRERSNQALVDAILDGLHWLGLDPDEGPLFQSDHTQRHTDMALKLLEEGKAYKCYCTKQELDDMRAAQQARKEKPRYDGRCRHRSEPPSDQPYVIRFKTPLEGEVVWPDMVQGTIHIANKELDDLILLRSDGSPTYNLAVVVDDHDMEITHVIRGEDHTSNTPRQIHLFQALGWDVPSYAHIPLLHGEDGSKLSKRHGAVSVLQFREEGFLASALNNYLVRMGWSHGEKEEFTMDEMVALFDVNNVGRSAAIFNTSKLLWLNGVHIRQSGPEQLRGELMWHLQRLGVDNPNPNFIDQIIPGMQERVKTMLEMAQMAMFYFKAPTEYAETAVAKHLHADILPAYAALLEKLHTVTADEWDNGGLERAFKVVMAETGAKMGKIGQPVRIAISGSDIAPGIYDILQLVGRHESLRRLEVLLSFFQQRVHGANG.

The 'HIGH' region signature appears at 7–17 (PSPTGFLHVGG). 4 residues coordinate Zn(2+): cysteine 96, cysteine 98, cysteine 123, and histidine 125. Over residues 112 to 129 (ARKEKPRYDGRCRHRSEP) the composition is skewed to basic and acidic residues. Residues 112–134 (ARKEKPRYDGRCRHRSEPPSDQP) form a disordered region. Residues 234–238 (KLSKR) carry the 'KMSKS' region motif. ATP is bound at residue lysine 237.

This sequence belongs to the class-I aminoacyl-tRNA synthetase family. Glutamate--tRNA ligase type 1 subfamily. As to quaternary structure, monomer. The cofactor is Zn(2+).

Its subcellular location is the cytoplasm. It carries out the reaction tRNA(Glu) + L-glutamate + ATP = L-glutamyl-tRNA(Glu) + AMP + diphosphate. Its function is as follows. Catalyzes the attachment of glutamate to tRNA(Glu) in a two-step reaction: glutamate is first activated by ATP to form Glu-AMP and then transferred to the acceptor end of tRNA(Glu). The sequence is that of Glutamate--tRNA ligase from Magnetococcus marinus (strain ATCC BAA-1437 / JCM 17883 / MC-1).